We begin with the raw amino-acid sequence, 444 residues long: Endothelin-3 receptor (444 aa).

A signal peptide spans 1-18; sequence MATVILFVAWMACLMVGV. Residues 19 to 88 lie on the Extracellular side of the membrane; the sequence is CYQEFQTQQN…SRAKIRHAFK (70 aa). Residue asparagine 60 is glycosylated (N-linked (GlcNAc...) asparagine). Residues 89 to 113 form a helical membrane-spanning segment; it reads YVTTILSCVIFLVGIVGNSTLLRII. Residues 114-124 are Cytoplasmic-facing; it reads YKNKCMRNGPN. The helical transmembrane segment at 125–145 threads the bilayer; sequence VLIASLALGDLFYILIAIPII. The Extracellular portion of the chain corresponds to 146–161; sequence SISFWLSTGHSEYIYQ. A helical membrane pass occupies residues 162-180; it reads LVHLYRARVYSLSLCALSI. The Cytoplasmic segment spans residues 181–201; sequence DRYRAVASWNRIRSIGIPVRK. The helical transmembrane segment at 202–226 threads the bilayer; it reads AIELTLIWAVAIIVAVPEAIAFNLV. At 227–254 the chain is on the extracellular side; sequence ELDFRGQTILVCMLPMEQTSDFMRFYQE. The chain crosses the membrane as a helical span at residues 255–279; the sequence is VKVWWLFGFYFCLPLACTGVFYTLM. At 280-307 the chain is on the cytoplasmic side; it reads SCEMLSIKNGMRIALNDHMKQRREVAKT. A helical membrane pass occupies residues 308–328; that stretch reads VFCLVVIFALCWLPLHVSSIF. The Extracellular segment spans residues 329–365; sequence VRLSATVKRACILKNKRSCIMAEIQTGVNYQLLMVMN. Residues 366–386 form a helical membrane-spanning segment; the sequence is YTGINMASLNSCIGPVALYFV. At 387 to 444 the chain is on the cytoplasmic side; it reads SRKFKNCFQSCLCCWCHRPTLTITPMDEKGSGGKWKANGHDLDLDRSSSRLSNKYSSS. Residues 416–444 are disordered; sequence GSGGKWKANGHDLDLDRSSSRLSNKYSSS. Residues 424–434 are compositionally biased toward basic and acidic residues; that stretch reads NGHDLDLDRSS. Positions 435-444 are enriched in low complexity; the sequence is SRLSNKYSSS.

It belongs to the G-protein coupled receptor 1 family. Endothelin receptor subfamily.

The protein resides in the cell membrane. In terms of biological role, receptor for endothelin-3. Mediates its action by association with G proteins that activate a phosphatidylinositol-calcium second messenger system. This Xenopus laevis (African clawed frog) protein is Endothelin-3 receptor.